We begin with the raw amino-acid sequence, 131 residues long: Cystatin-like cysteine protease inhibitor EPIC3 (131 aa).

The first 20 residues, 1–20 (MAFTRSIALFAGLALAASSA), serve as a signal peptide directing secretion. Residue N33 is glycosylated (N-linked (GlcNAc...) asparagine). The short motif at 71–75 (QTVAG) is the Secondary area of contact element.

It belongs to the cystatin family.

It localises to the secreted. Functionally, secreted effector that interacts with and inhibits host apoplastic pathogenesis-related papain-like cysteine proteases. Inhibition of host proteases by a pathogen extracellular protease inhibitor forms a specific type of defense-counterdefense mechanism between plants and microbial pathogens. This Phytophthora infestans (Potato late blight agent) protein is Cystatin-like cysteine protease inhibitor EPIC3.